A 232-amino-acid polypeptide reads, in one-letter code: MTSHRKHLVRDFNHFITCFVCKGYLIKPTTVTECLHTFCKSCIVQHFEDSNDCPKCGIQVHETNPLEMLRLDNTLEEVIFKLVPGLREKEQQQEDEFWRRKESNDENGPMCKKRRVDEEDDDKGDGDYHRSDPQIAICLDCLRINGQMGENIVKGLMKKFIRCSTRVTVGTIKKFLSLKLKLPSSYELDVLCNGEIMGKDHTMEFIYMTRWRLRGENVYPMVLEYRPRIDFG.

The RING-type zinc finger occupies 18–57 (CFVCKGYLIKPTTVTECLHTFCKSCIVQHFEDSNDCPKCG). A compositionally biased stretch (basic and acidic residues) spans 93 to 104 (QEDEFWRRKESN). A disordered region spans residues 93 to 128 (QEDEFWRRKESNDENGPMCKKRRVDEEDDDKGDGDY).

In terms of assembly, component of a PRC1-like complex.

The protein localises to the nucleus. Its function is as follows. Component of Polycomb group (PcG) multiprotein complexes; the complex class is required to maintain the transcriptionally repressive state of some genes. The polypeptide is Polycomb group RING finger protein 5-B (pcgf5b) (Danio rerio (Zebrafish)).